Consider the following 88-residue polypeptide: Transcription factor ILI5 (88 aa).

Residues Met1–Leu54 enclose the bHLH domain.

The protein belongs to the bHLH protein family. In terms of assembly, interacts with APG.

Its subcellular location is the nucleus. Atypical and probable non DNA-binding bHLH transcription factor that acts as a positive regulator of grain size. Binds the transcription repressor APG and forms a heterodimer of antagonistic basic helix-loop-helix transcription factors that regulates grain length and weight by controlling cell elongation in lemma and palea. The protein is Transcription factor ILI5 (ILI5) of Oryza sativa subsp. indica (Rice).